The chain runs to 161 residues: MAKNTDRICFLVLRLLAFGATLSAAIVMATSHERTTYLSLSIEAKYSHTPAFKYFVIANAIGSAYSLLLLFLPSHGSLWPLVIASDVVITMFLTSSISAALSIAYVGKKGNSYAGWLPICDQVPNYCNHVTGALAAGFIGVVLYMVLLQYSIYTKCCKSSS.

The Cytoplasmic segment spans residues Met1–Arg7. The chain crosses the membrane as a helical span at residues Ile8–Met28. At Ala29 to Lys53 the chain is on the extracellular side. Residues Tyr54–Ser74 form a helical membrane-spanning segment. Residues His75–Asp86 are Cytoplasmic-facing. The chain crosses the membrane as a helical span at residues Val87 to Gly107. The Extracellular portion of the chain corresponds to Lys108 to Thr131. Residues Gly132–Ile152 traverse the membrane as a helical segment. The Cytoplasmic segment spans residues Tyr153–Ser161.

This sequence belongs to the Casparian strip membrane proteins (CASP) family. In terms of assembly, homodimer and heterodimers.

The protein resides in the cell membrane. The polypeptide is CASP-like protein 1C2 (Vitis vinifera (Grape)).